The primary structure comprises 173 residues: NAD(P)H-quinone oxidoreductase subunit J (173 aa).

It belongs to the complex I 30 kDa subunit family. In terms of assembly, NDH-1 can be composed of about 15 different subunits; different subcomplexes with different compositions have been identified which probably have different functions.

The protein resides in the cellular thylakoid membrane. It carries out the reaction a plastoquinone + NADH + (n+1) H(+)(in) = a plastoquinol + NAD(+) + n H(+)(out). The enzyme catalyses a plastoquinone + NADPH + (n+1) H(+)(in) = a plastoquinol + NADP(+) + n H(+)(out). In terms of biological role, NDH-1 shuttles electrons from an unknown electron donor, via FMN and iron-sulfur (Fe-S) centers, to quinones in the respiratory and/or the photosynthetic chain. The immediate electron acceptor for the enzyme in this species is believed to be plastoquinone. Couples the redox reaction to proton translocation, and thus conserves the redox energy in a proton gradient. Cyanobacterial NDH-1 also plays a role in inorganic carbon-concentration. This chain is NAD(P)H-quinone oxidoreductase subunit J, found in Prochlorococcus marinus (strain NATL1A).